A 181-amino-acid polypeptide reads, in one-letter code: CASP-like protein 5A1 (181 aa).

At 1-38 (MFASRPVVHPLEVAAPAHPVQQPAPGVLMKDLPGMPGT) the chain is on the cytoplasmic side. The helical transmembrane segment at 39–59 (PGGLGLRVLQLLFAAISLAVM) threads the bilayer. Topologically, residues 60–77 (SSTADFASVSAFCYLITT) are extracellular. Residues 78-98 (TVLQCVWSLTVAIVDIYALLV) traverse the membrane as a helical segment. The Cytoplasmic segment spans residues 99–115 (KRCLQNRRAVTLFSIGD). A helical transmembrane segment spans residues 116 to 136 (GITWLVSFSGACAAAGIPVLI). Residues 137–153 (DADLIMCSENPCASFQT) are Extracellular-facing. Residues 154 to 174 (AVAMGFMCCFSLLPSFLLNFY) traverse the membrane as a helical segment. Over 175–181 (SIASSHG) the chain is Cytoplasmic.

This sequence belongs to the Casparian strip membrane proteins (CASP) family. As to quaternary structure, homodimer and heterodimers.

Its subcellular location is the cell membrane. This Zea mays (Maize) protein is CASP-like protein 5A1.